The sequence spans 121 residues: Large ribosomal subunit protein uL18 (121 aa).

The disordered stretch occupies residues 1–25; sequence MKIVISKPDKNKIRQKRHRRVRGKL. Residues 13-23 are compositionally biased toward basic residues; sequence IRQKRHRRVRG.

It belongs to the universal ribosomal protein uL18 family. In terms of assembly, part of the 50S ribosomal subunit; part of the 5S rRNA/L5/L18/L25 subcomplex. Contacts the 5S and 23S rRNAs.

In terms of biological role, this is one of the proteins that bind and probably mediate the attachment of the 5S RNA into the large ribosomal subunit, where it forms part of the central protuberance. The sequence is that of Large ribosomal subunit protein uL18 from Streptococcus pyogenes serotype M28 (strain MGAS6180).